The primary structure comprises 410 residues: Kynureninase (410 aa).

Residues Thr-108, Ser-109, 135–138, Thr-176, Asp-205, His-208, and Tyr-230 contribute to the pyridoxal 5'-phosphate site; that span reads FPTD. The residue at position 231 (Lys-231) is an N6-(pyridoxal phosphate)lysine. Pyridoxal 5'-phosphate contacts are provided by Trp-260 and Thr-286.

This sequence belongs to the kynureninase family. Homodimer. Pyridoxal 5'-phosphate is required as a cofactor.

The catalysed reaction is L-kynurenine + H2O = anthranilate + L-alanine + H(+). It carries out the reaction 3-hydroxy-L-kynurenine + H2O = 3-hydroxyanthranilate + L-alanine + H(+). It functions in the pathway amino-acid degradation; L-kynurenine degradation; L-alanine and anthranilate from L-kynurenine: step 1/1. The protein operates within cofactor biosynthesis; NAD(+) biosynthesis; quinolinate from L-kynurenine: step 2/3. Its function is as follows. Catalyzes the cleavage of L-kynurenine (L-Kyn) and L-3-hydroxykynurenine (L-3OHKyn) into anthranilic acid (AA) and 3-hydroxyanthranilic acid (3-OHAA), respectively. The polypeptide is Kynureninase (Deinococcus radiodurans (strain ATCC 13939 / DSM 20539 / JCM 16871 / CCUG 27074 / LMG 4051 / NBRC 15346 / NCIMB 9279 / VKM B-1422 / R1)).